A 134-amino-acid polypeptide reads, in one-letter code: Large ribosomal subunit protein bL20 (134 aa).

This sequence belongs to the bacterial ribosomal protein bL20 family.

Functionally, binds directly to 23S ribosomal RNA and is necessary for the in vitro assembly process of the 50S ribosomal subunit. It is not involved in the protein synthesizing functions of that subunit. In Brucella abortus (strain S19), this protein is Large ribosomal subunit protein bL20.